Reading from the N-terminus, the 125-residue chain is S-adenosylmethionine decarboxylase proenzyme (125 aa).

The active-site Schiff-base intermediate with substrate; via pyruvic acid is the Ser71. Ser71 carries the pyruvic acid (Ser); by autocatalysis modification. Catalysis depends on His76, which acts as the Proton acceptor; for processing activity. Residue Cys91 is the Proton donor; for catalytic activity of the active site.

This sequence belongs to the prokaryotic AdoMetDC family. Type 1 subfamily. As to quaternary structure, heterotetramer of two alpha and two beta chains arranged as a dimer of alpha/beta heterodimers. Requires pyruvate as cofactor. In terms of processing, is synthesized initially as an inactive proenzyme. Formation of the active enzyme involves a self-maturation process in which the active site pyruvoyl group is generated from an internal serine residue via an autocatalytic post-translational modification. Two non-identical subunits are generated from the proenzyme in this reaction, and the pyruvate is formed at the N-terminus of the alpha chain, which is derived from the carboxyl end of the proenzyme. The post-translation cleavage follows an unusual pathway, termed non-hydrolytic serinolysis, in which the side chain hydroxyl group of the serine supplies its oxygen atom to form the C-terminus of the beta chain, while the remainder of the serine residue undergoes an oxidative deamination to produce ammonia and the pyruvoyl group blocking the N-terminus of the alpha chain.

The catalysed reaction is S-adenosyl-L-methionine + H(+) = S-adenosyl 3-(methylsulfanyl)propylamine + CO2. Its pathway is amine and polyamine biosynthesis; S-adenosylmethioninamine biosynthesis; S-adenosylmethioninamine from S-adenosyl-L-methionine: step 1/1. Its function is as follows. Catalyzes the decarboxylation of S-adenosylmethionine to S-adenosylmethioninamine (dcAdoMet), the propylamine donor required for the synthesis of the polyamines spermine and spermidine from the diamine putrescine. This chain is S-adenosylmethionine decarboxylase proenzyme, found in Pyrobaculum islandicum (strain DSM 4184 / JCM 9189 / GEO3).